The following is a 919-amino-acid chain: Glutamate receptor ionotropic, kainate 3 (919 aa).

The N-terminal stretch at 1–31 (MTAPWRRLRSLVWEYWAGLLVCAFWIPDSRG) is a signal peptide. Residues 32–563 (MPHVIRIGGI…VFSFLNPLSP (532 aa)) are Extracellular-facing. N-linked (GlcNAc...) asparagine glycans are attached at residues Asn70, Asn76, Asn278, Asn381, Asn415, Asn426, and Asn433. The cysteines at positions 99 and 350 are disulfide-linked. 3 residues coordinate L-glutamate: Pro518, Thr520, and Arg525. Asn548 and Asn551 each carry an N-linked (GlcNAc...) asparagine glycan. A helical transmembrane segment spans residues 564–584 (DIWMYVLLAYLGVSCVLFVIA). The Cytoplasmic portion of the chain corresponds to 585–636 (RFSPYEWYDAHPCNPGSEVVENNFTLLNSFWFGMGSLMQQGSELMPKALSTR). Residues 637-657 (IIGGIWWFFTLIIISSYTANL) form a helical membrane-spanning segment. At 658–820 (AAFLTVERME…KEASALGIQK (163 aa)) the chain is on the extracellular side. 3 residues coordinate L-glutamate: Ala691, Thr692, and Glu739. An N-linked (GlcNAc...) asparagine glycan is attached at Asn752. Residues 821-841 (IGGIFIVLAAGLVLSVLVAVG) form a helical membrane-spanning segment. Topologically, residues 842-919 (EFVYKLRKTA…CSTSLAPVFP (78 aa)) are cytoplasmic. Ser869 carries the post-translational modification Phosphoserine. Residue Lys887 forms a Glycyl lysine isopeptide (Lys-Gly) (interchain with G-Cter in SUMO1) linkage.

It belongs to the glutamate-gated ion channel (TC 1.A.10.1) family. GRIK3 subfamily. As to quaternary structure, homotetramer, and heterotetramer with either GRIK4 or GRIK5. Can form functional heteromeric receptors with GRIK2. Interacts with PRKCABP. Interacts with NETO2.

It is found in the cell membrane. The protein resides in the postsynaptic cell membrane. It catalyses the reaction Ca(2+)(in) = Ca(2+)(out). In terms of biological role, ionotropic glutamate receptor that functions as a cation-permeable ligand-gated ion channel, gated by L-glutamate and the glutamatergic agonist kainic acid. Binding of the excitatory neurotransmitter L-glutamate induces a conformation change, leading to the opening of the cation channel, and thereby converts the chemical signal to an electrical impulse. The receptor then desensitizes rapidly and enters a transient inactive state, characterized by the presence of bound agonist. In association with GRIK2, involved in presynaptic facilitation of glutamate release at hippocampal mossy fiber synapses. This chain is Glutamate receptor ionotropic, kainate 3 (GRIK3), found in Homo sapiens (Human).